We begin with the raw amino-acid sequence, 304 residues long: Protein Largen (304 aa).

Over residues 1-22 (MSAKSKGNPSSSSAAEGPPAAS) the composition is skewed to low complexity. 4 disordered regions span residues 1 to 27 (MSAK…TKVK), 66 to 109 (QLED…PPAH), 114 to 133 (LTVL…TPVR), and 236 to 304 (EPVH…TTTV). Residues 33–70 (IVEDLELVLGDLKDVAKELKEVVDQIDTLTSDLQLEDE) are a coiled coil. A compositionally biased stretch (low complexity) spans 77–91 (TDTLNSSSSGTTASS). 2 stretches are compositionally biased toward pro residues: residues 120–129 (PNPPPPPPRL) and 275–289 (FPPP…PAAP).

In terms of biological role, regulator of cell size that promotes cell size increase independently of mTOR and Hippo signaling pathways. Acts by stimulating the translation of specific mRNAs, including those encoding proteins affecting mitochondrial functions. Increases mitochondrial mass and respiration. This chain is Protein Largen (Prr16), found in Mus musculus (Mouse).